Consider the following 405-residue polypeptide: MDMNTFPANTYCDSIVRFLDAIEYHDDNLTHDERVEGLRHVHSRTAQYFTEPLPRKVLKDVAPRRIAAVTRTISHFIVYCWSKLPREAQVDVSIYLSIINVLDDEISSEPSTQMATFWTDLVQGKQQKHPFWVLFNSHLPRLLRHYDSFCSFNIMRCTFDYFEGCWIEQHNFQGYPGADCYPLFLRRLNCLGGAVAGTIFPAAKFDEQKLFAEISCVMAQIDGPVALVNDLFSFYKEYDQDEANLVTNWCTVDGITMDQALTRLTDDTIHACVRILEILKDKDPDMLATIRGFIHGYVTWHICDFRYRLREIYDREDLGGSSAKFRDYFDTAINVGWVDVEEWTCQVQGFEVDGPVPKGSEIQAYRTNAFGFSVDTRRPHNMDYVGSSIISMFEWVTGYLKGKSR.

Positions 103, 168, 229, 233, 237, and 241 each coordinate Mg(2+). Residues 103–108 (DDEISS) carry the D(D/E)XX(D/E) motif motif. The short motif at 227–237 (LVNDLFSFYKE) is the NSE motif element. The WxxxxxRY motif motif lies at 316 to 323 (EDLGGSSA).

It belongs to the trichodiene synthase family. It depends on Mg(2+) as a cofactor.

It participates in secondary metabolite biosynthesis; terpenoid biosynthesis. Functionally, terpene cyclase; part of the gene cluster that mediates the biosynthesis of the sesquiterpenoid aspterric acid (AA), an inhibitor of dihydroxy-acid dehydratase (DHAD) effective as an herbicide. PbrA cyclizes farnesyl diphosphate (FPP) to produce (-)-daucane. The cytochrome P450 monooxygenase pbrBB then converts (-)-daucane into the alpha-epoxy carboxylate intermediate which is further converted into the tricyclic aspterric acid by the cytochrome P450 monooxygenase pbrC. This chain is Terpene cyclase pbrA, found in Penicillium brasilianum.